The chain runs to 103 residues: DNA-binding protein TRF1 (103 aa).

Functionally, DNA-binding protein that recognizes the inverted terminal repeats of the pGKl linear DNA plasmids. In Kluyveromyces lactis (strain ATCC 8585 / CBS 2359 / DSM 70799 / NBRC 1267 / NRRL Y-1140 / WM37) (Yeast), this protein is DNA-binding protein TRF1 (TRF1).